We begin with the raw amino-acid sequence, 65 residues long: Large ribosomal subunit protein bL35 (65 aa).

The tract at residues 1-46 is disordered; the sequence is MPKMKTRQSAAKRYEVTGSGKLRRRRAGKNHLLQHKSAARKRSLST. Residues 21–44 are compositionally biased toward basic residues; the sequence is KLRRRRAGKNHLLQHKSAARKRSL.

This sequence belongs to the bacterial ribosomal protein bL35 family.

This Gloeobacter violaceus (strain ATCC 29082 / PCC 7421) protein is Large ribosomal subunit protein bL35.